Here is a 150-residue protein sequence, read N- to C-terminus: uncharacterized protein (150 aa).

An N-terminal signal peptide occupies residues 1–22 (MVIALKRFSFLASIATLTVLNA). Residue C23 is the site of N-palmitoyl cysteine attachment. C23 carries S-diacylglycerol cysteine lipidation.

It belongs to the MG067/MG068/MG395 family.

It localises to the cell membrane. This is an uncharacterized protein from Mycoplasma pneumoniae (strain ATCC 29342 / M129 / Subtype 1) (Mycoplasmoides pneumoniae).